Reading from the N-terminus, the 250-residue chain is Ubiquinone/menaquinone biosynthesis C-methyltransferase UbiE (250 aa).

Residues Ser73, Asp94, and 122–123 each bind S-adenosyl-L-methionine; that span reads NA.

This sequence belongs to the class I-like SAM-binding methyltransferase superfamily. MenG/UbiE family.

The enzyme catalyses a 2-demethylmenaquinol + S-adenosyl-L-methionine = a menaquinol + S-adenosyl-L-homocysteine + H(+). It catalyses the reaction a 2-methoxy-6-(all-trans-polyprenyl)benzene-1,4-diol + S-adenosyl-L-methionine = a 5-methoxy-2-methyl-3-(all-trans-polyprenyl)benzene-1,4-diol + S-adenosyl-L-homocysteine + H(+). It participates in quinol/quinone metabolism; menaquinone biosynthesis; menaquinol from 1,4-dihydroxy-2-naphthoate: step 2/2. The protein operates within cofactor biosynthesis; ubiquinone biosynthesis. Its function is as follows. Methyltransferase required for the conversion of demethylmenaquinol (DMKH2) to menaquinol (MKH2) and the conversion of 2-polyprenyl-6-methoxy-1,4-benzoquinol (DDMQH2) to 2-polyprenyl-3-methyl-6-methoxy-1,4-benzoquinol (DMQH2). The protein is Ubiquinone/menaquinone biosynthesis C-methyltransferase UbiE of Legionella pneumophila (strain Corby).